Reading from the N-terminus, the 1217-residue chain is ATP-dependent helicase/nuclease subunit A (1217 aa).

Positions 10 to 475 (VIWTDAQWQS…IDLSQNFRSR (466 aa)) constitute a UvrD-like helicase ATP-binding domain. 31–38 (AAAGSGKT) serves as a coordination point for ATP. The UvrD-like helicase C-terminal domain occupies 476–786 (KEVLSTTNYI…RMMTIHSSKG (311 aa)).

Belongs to the helicase family. AddA subfamily. In terms of assembly, heterodimer of AddA and AddB/RexB. Mg(2+) serves as cofactor.

The catalysed reaction is Couples ATP hydrolysis with the unwinding of duplex DNA by translocating in the 3'-5' direction.. It carries out the reaction ATP + H2O = ADP + phosphate + H(+). The heterodimer acts as both an ATP-dependent DNA helicase and an ATP-dependent, dual-direction single-stranded exonuclease. Recognizes the chi site generating a DNA molecule suitable for the initiation of homologous recombination. The AddA nuclease domain is required for chi fragment generation; this subunit has the helicase and 3' -&gt; 5' nuclease activities. In Staphylococcus aureus (strain NCTC 8325 / PS 47), this protein is ATP-dependent helicase/nuclease subunit A.